A 210-amino-acid polypeptide reads, in one-letter code: LexA repressor (210 aa).

Residues 31–51 (RAEISRELGFRSPNAAEEHLK) constitute a DNA-binding region (H-T-H motif). Residues Ser-126 and Lys-163 each act as for autocatalytic cleavage activity in the active site.

The protein belongs to the peptidase S24 family. As to quaternary structure, homodimer.

It carries out the reaction Hydrolysis of Ala-|-Gly bond in repressor LexA.. Its function is as follows. Represses a number of genes involved in the response to DNA damage (SOS response), including recA and lexA. In the presence of single-stranded DNA, RecA interacts with LexA causing an autocatalytic cleavage which disrupts the DNA-binding part of LexA, leading to derepression of the SOS regulon and eventually DNA repair. The sequence is that of LexA repressor from Actinobacillus succinogenes (strain ATCC 55618 / DSM 22257 / CCUG 43843 / 130Z).